Here is a 137-residue protein sequence, read N- to C-terminus: MYCTHLRMLQLVVMATLWVTPVRAGTHCRYGCRLNNMTITVEREDCHGSITITTCAGLCETTDLNYQSTWLPRSQGACNFKEWSYEEVYLEGCPPGANPFFIPVAKSCDCIKCKTDNTDCDRISMATPSCVVNPLEM.

Positions 1–24 are cleaved as a signal peptide; the sequence is MYCTHLRMLQLVVMATLWVTPVRA. 5 cysteine pairs are disulfide-bonded: Cys32-Cys78, Cys46-Cys93, Cys55-Cys108, Cys59-Cys110, and Cys113-Cys120. An N-linked (GlcNAc...) asparagine glycan is attached at Asn36.

It belongs to the glycoprotein hormones subunit beta family. As to quaternary structure, heterodimer of an alpha and a beta chain.

The protein localises to the secreted. Its function is as follows. Involved in gametogenesis and steroidogenesis. This chain is Gonadotropin subunit beta-1 (cgba), found in Coregonus autumnalis (Arctic cisco).